We begin with the raw amino-acid sequence, 23 residues long: U1-ctenitoxin-Co1a (23 aa).

Cys-10 and Cys-20 are joined by a disulfide.

As to expression, expressed by the venom gland.

It localises to the secreted. In terms of biological role, insecticidal neurotoxin that reversibly inhibits the N-methyl-D-aspartate (NMDA)-subtype of ionotropic glutamate receptor (GRIN) and inhibits inactivation of insect sodium channels (Nav). In vivo, is highly toxic to insects. This Ctenus ornatus (Brazilian spider) protein is U1-ctenitoxin-Co1a.